Here is a 389-residue protein sequence, read N- to C-terminus: Phosphopentomutase (389 aa).

Aspartate 12, aspartate 284, histidine 289, aspartate 325, histidine 326, and histidine 337 together coordinate Mn(2+).

This sequence belongs to the phosphopentomutase family. Mn(2+) serves as cofactor.

It is found in the cytoplasm. The enzyme catalyses 2-deoxy-alpha-D-ribose 1-phosphate = 2-deoxy-D-ribose 5-phosphate. It catalyses the reaction alpha-D-ribose 1-phosphate = D-ribose 5-phosphate. Its pathway is carbohydrate degradation; 2-deoxy-D-ribose 1-phosphate degradation; D-glyceraldehyde 3-phosphate and acetaldehyde from 2-deoxy-alpha-D-ribose 1-phosphate: step 1/2. Functionally, isomerase that catalyzes the conversion of deoxy-ribose 1-phosphate (dRib-1-P) and ribose 1-phosphate (Rib-1-P) to deoxy-ribose 5-phosphate (dRib-5-P) and ribose 5-phosphate (Rib-5-P), respectively. In Anaeromyxobacter sp. (strain Fw109-5), this protein is Phosphopentomutase.